Reading from the N-terminus, the 3132-residue chain is Toxin CdiA (3132 aa).

The segment at residues 1–32 (MHQPPVRFTYRLLSYLVSAIIAGQPLLPAVGA) is a signal peptide (signal). A two-partner system transport domain (TPS) region spans residues 36–322 (PQNGAGMDKA…AGGNLSVTGT (287 aa)). An FHA-1 region spans residues 351–1378 (GELTAGQNAM…ITMNTAHLLN (1028 aa)). Residues 1379–1635 (SWDAISASHE…LSLSGASVSS (257 aa)) are receptor-binding domain (RBD). The interval 1636–1820 (YPLPSGNNGY…LSPEDITLHN (185 aa)) is YP domain. Residues 1821–1859 (GSVISGNNVQLAGGNITNSGSSINAQNDLLLDRTGSIDN) are periplasmic FHA-1 repeat (pFR). Positions 1930-2526 (RATDSLFMGA…QDSDRYDSRQ (597 aa)) are FHA-2. 2 disordered regions span residues 2195 to 2228 (TGTG…STIG) and 2456 to 2497 (AGIN…SGAQ). 2 stretches are compositionally biased toward polar residues: residues 2217 to 2228 (GTTQSQSASTIG) and 2483 to 2497 (VSLT…SGAQ). Positions 2862 to 2904 (DNLSEQERQQISMLATIASGIAGGLVGNSTSAAGTGAQAGRNS) are pre-toxin (PT) domain. The short motif at 2905-2908 (VENN) is the VENN CT cleavage motif element. Positions 2909–3121 (AMSGLEGFGT…IGTVTDYQIE (213 aa)) are C-terminal effector domain (CT).

In the N-terminal section; belongs to the CdiA toxin family. In terms of assembly, probably interacts with cognate immunity protein CdiI. Expressed as 303 kDa protein which can be processed to 284 kDa and 195 kDa forms.

The protein resides in the secreted. The protein localises to the target cell. It is found in the target cell cytoplasm. Toxic component of a toxin-immunity protein module, which functions as a cellular contact-dependent growth inhibition (CDI) system. CDI modules allow bacteria to communicate with and inhibit the growth of closely related neighboring bacteria (target cell counts decrease 1000- to 10(5)-fold) in a contact-dependent fashion. Inhibitory cells must be in logarithmic (not stationary) phase to inhibit growth of their targets, but protein synthesis is not necessary. The presence of P or S but not type 1 pili protects the target cells against growth inhibition for this CDI. BamA on the outer membrane of target cells acts as a receptor for CdiA, while target cell multidrug efflux pump AcrB facilitates its transport into the cytoplasm. Outer membrane receptor function is dependent on extracellular loops of BamA. Cells undergoing CDI show a 2- to 5-fold reversible decrease in aerobic respiration, proton motive force and steady-state ATP levels, suggesting this CT module is an ionophore that disrupts the target cell's inner cell membrane. Growth recovery requires an energy source. Cells expressing this protein in the absence of CdiI initially form filaments, some of which contain multiple nucleoids, while others are devoid of nucleoids. CDI cells induce the phage shock response, but pspA is not required for recovery from CDI. CDI is neutralized by its cognate immunity protein CdiI, but not by non-cognate CdiI from other bacteria with different CDI systems. Plays a role in biofilm formation, a region N-terminal to residue 644 is implicated in this receptor-independent cell adhesion. In terms of biological role, the CdiA protein is thought to be exported from the cell through the central lumen of CdiB, the other half of its two-partner system (TPS). The TPS domain probably remains associated with CdiB while the FHA-1 domain forms an extended filament (33 nm long) with the receptor-binding domain (RBD) at its extremity; in the secretion arrested state the C-terminus of the RBD and YP domains form a hairpin-like structure as the FHA-2, PT and CT domains are periplasmic. The YP domain is probably responsible for this arrest at the point where it re-enters the host cell periplasm. Upon binding to a target cell outer membrane receptor (BamA for this CDI) a signal is transmitted to activate secretion. The filament becomes about 5 nm longer, the rest of CdiA is secreted and the FHA-2 domain becomes stably associated with the target cell's outer membrane where it facilitates entry of the toxic CT domain into the target cell periplasm. From there the toxic CT domain is cleaved and gains access to the target cell cytoplasm via an inner membrane protein (multidrug efflux pump AcrB for this CDI). This Escherichia coli protein is Toxin CdiA.